The following is a 180-amino-acid chain: Ribulose bisphosphate carboxylase small subunit, chloroplastic (180 aa).

A chloroplast-targeting transit peptide spans 1–56 (MALISSAAVTTVNRASSAQANLVAPFTGLKSSAGFPVTKKTNNDITSIASNGGRVN).

The protein belongs to the RuBisCO small chain family. In terms of assembly, heterohexadecamer of 8 large and 8 small subunits.

The protein localises to the plastid. It localises to the chloroplast. Functionally, ruBisCO catalyzes two reactions: the carboxylation of D-ribulose 1,5-bisphosphate, the primary event in carbon dioxide fixation, as well as the oxidative fragmentation of the pentose substrate. Both reactions occur simultaneously and in competition at the same active site. Although the small subunit is not catalytic it is essential for maximal activity. The polypeptide is Ribulose bisphosphate carboxylase small subunit, chloroplastic (Medicago sativa (Alfalfa)).